A 155-amino-acid polypeptide reads, in one-letter code: RNA pyrophosphohydrolase (155 aa).

Residues 5 to 147 (KYRPNVAAII…KRQVYRQVIA (143 aa)) form the Nudix hydrolase domain. The Nudix box motif lies at 42–63 (GGIDEGETPLEALYRELLEEIG).

This sequence belongs to the Nudix hydrolase family. RppH subfamily. A divalent metal cation is required as a cofactor.

Accelerates the degradation of transcripts by removing pyrophosphate from the 5'-end of triphosphorylated RNA, leading to a more labile monophosphorylated state that can stimulate subsequent ribonuclease cleavage. This is RNA pyrophosphohydrolase from Helicobacter pylori (strain P12).